Consider the following 397-residue polypeptide: Methylthioribose kinase (397 aa).

ATP is bound by residues Asn44, Lys61, and 115-117 (EDL). Asp233 contributes to the substrate binding site. 250 to 252 (DPE) serves as a coordination point for ATP. A substrate-binding site is contributed by Arg340.

Belongs to the methylthioribose kinase family. In terms of assembly, homodimer.

It carries out the reaction 5-(methylsulfanyl)-D-ribose + ATP = 5-(methylsulfanyl)-alpha-D-ribose 1-phosphate + ADP + H(+). Its pathway is amino-acid biosynthesis; L-methionine biosynthesis via salvage pathway; S-methyl-5-thio-alpha-D-ribose 1-phosphate from S-methyl-5'-thioadenosine (hydrolase route): step 2/2. Its function is as follows. Catalyzes the phosphorylation of methylthioribose into methylthioribose-1-phosphate. The polypeptide is Methylthioribose kinase (mtnK) (Bacillus subtilis (strain 168)).